The sequence spans 55 residues: Large ribosomal subunit protein bL33 (55 aa).

The protein belongs to the bacterial ribosomal protein bL33 family.

The sequence is that of Large ribosomal subunit protein bL33 from Arthrobacter sp. (strain FB24).